Reading from the N-terminus, the 399-residue chain is Oligoribonuclease NrnB (399 aa).

Requires Mn(2+) as cofactor. Co(2+) is required as a cofactor. Mg(2+) serves as cofactor.

The protein localises to the cytoplasm. In terms of biological role, degrades RNA oligonucleotides with a length of 5 nucleotides in a 3'- to 5'-direction. Less active on shorter RNA oligonucleotides and on those with a length of 24 nucleotides. Prefers RNA oligonucleotides containing adenines rather than cytosines. This Bacillus subtilis (strain 168) protein is Oligoribonuclease NrnB (nrnB).